A 542-amino-acid polypeptide reads, in one-letter code: Sodium/hydrogen exchanger 8 (542 aa).

The next 11 helical transmembrane spans lie at 55–75, 79–99, 118–138, 151–171, 186–206, 256–276, 306–326, 349–369, 374–394, 412–432, and 446–466; these read EQSS…CIIL, LIRY…LGIL, EEMF…IFES, IGSI…VVGG, NMTD…VATI, TFLQ…ALGT, AYLP…VFAF, LVLF…NFFR, TPKM…PYAL, TTIV…MPLI, and NKKD…ESEH. Thr-471 bears the Phosphothreonine mark. Phosphoserine occurs at positions 532 and 534.

It belongs to the monovalent cation:proton antiporter 1 (CPA1) transporter (TC 2.A.36) family.

The protein localises to the golgi apparatus membrane. Its subcellular location is the golgi apparatus. The protein resides in the trans-Golgi network membrane. It is found in the endosome. It localises to the multivesicular body membrane. The protein localises to the apical cell membrane. Its subcellular location is the cytoplasmic vesicle. The protein resides in the secretory vesicle. It is found in the acrosome. The catalysed reaction is Na(+)(in) + H(+)(out) = Na(+)(out) + H(+)(in). Functionally, na(+)/H(+) antiporter. Mediates the electoneutral exchange of intracellular H(+) ions for extracellular Na(+) in 1:1 stoichiometry. Acts as an Na(+)/H(+) exchanger in the trans-Golgi. Contributes to the regulation of pH regulation of Golgi apparatus, and consequently, in protein trafficking and endosomal morphology. In germ cells, plays a crucial role in acrosome biogenesis and sperm development, probably by playing a role in the fusion of the Golgi-derived vesicles that form the acrosomal cap. Can also be active at the cell surface of specialized cells. In the small intestine, at the cell membrane, plays a major physiological role in transepithelial absorption of Na(+) and regulates intracellular pH homeostasis of intestinal epithelial cells. Acts as an important regulator of mucosal integrity in the intestine and in the stomach, could mediate the pH fluctuation necessary for mucin exocytosis or assist membrane trafficking of other proteins. Plays a role in photoreceptor survival and in the maintenance of intracellular pH homeostasis in retinal pigment epithelium (RPE cells). This Macaca fascicularis (Crab-eating macaque) protein is Sodium/hydrogen exchanger 8 (SLC9A8).